The primary structure comprises 95 residues: Sec-independent protein translocase protein TatA (95 aa).

A helical transmembrane segment spans residues 1–21 (MGSMSVWHWVIVAVVVMLLFG). The segment at 42–95 (GMADDETQPNTATSVPPVGPNDPVRTLPHQGAPGTAPQPPHVQPHVSAGDHKAV) is disordered.

Belongs to the TatA/E family. The Tat system comprises two distinct complexes: a TatABC complex, containing multiple copies of TatA, TatB and TatC subunits, and a separate TatA complex, containing only TatA subunits. Substrates initially bind to the TatABC complex, which probably triggers association of the separate TatA complex to form the active translocon.

Its subcellular location is the cell inner membrane. Its function is as follows. Part of the twin-arginine translocation (Tat) system that transports large folded proteins containing a characteristic twin-arginine motif in their signal peptide across membranes. TatA could form the protein-conducting channel of the Tat system. This chain is Sec-independent protein translocase protein TatA, found in Methylorubrum extorquens (strain CM4 / NCIMB 13688) (Methylobacterium extorquens).